A 200-amino-acid chain; its full sequence is MLAFCRSSLKSKKYFIILLALAAIAGLGTHAAWSSNGLPRIDNKTLARLAQQHPVVVLFRHAERCDRSTNQCLSDKTGITVKGTQDARELGNAFSADIPDFDLYSSNTVRTIQSATWFSAGKKLTVDKRLLQCGNEIYSAIKDLQSKAPDKNIVIFTHNHCLTYIAKNKRDATFKPDYLDGLVMHVEKGKVYLDGEFVNH.

An N-terminal signal peptide occupies residues 1-25; it reads MLAFCRSSLKSKKYFIILLALAAIA.

The protein belongs to the phosphoglycerate mutase family. Ais subfamily.

Its subcellular location is the periplasm. It participates in bacterial outer membrane biogenesis; lipopolysaccharide metabolism. Its function is as follows. Catalyzes the dephosphorylation of heptose(II) of the outer membrane lipopolysaccharide core. This Escherichia coli (strain SE11) protein is Lipopolysaccharide core heptose(II)-phosphate phosphatase.